We begin with the raw amino-acid sequence, 354 residues long: Chorismate synthase (354 aa).

NADP(+) is bound at residue Arg-48. FMN is bound by residues Arg-125 to Ser-127, Ala-280, Lys-295 to Ser-299, and Arg-321.

This sequence belongs to the chorismate synthase family. As to quaternary structure, homotetramer. The cofactor is FMNH2.

It carries out the reaction 5-O-(1-carboxyvinyl)-3-phosphoshikimate = chorismate + phosphate. Its pathway is metabolic intermediate biosynthesis; chorismate biosynthesis; chorismate from D-erythrose 4-phosphate and phosphoenolpyruvate: step 7/7. Catalyzes the anti-1,4-elimination of the C-3 phosphate and the C-6 proR hydrogen from 5-enolpyruvylshikimate-3-phosphate (EPSP) to yield chorismate, which is the branch point compound that serves as the starting substrate for the three terminal pathways of aromatic amino acid biosynthesis. This reaction introduces a second double bond into the aromatic ring system. The protein is Chorismate synthase of Syntrophus aciditrophicus (strain SB).